The primary structure comprises 434 residues: Adenylosuccinate synthetase (434 aa).

GTP contacts are provided by residues glycine 25 to lysine 31 and glycine 53 to threonine 55. Aspartate 26 serves as the catalytic Proton acceptor. Aspartate 26 and glycine 53 together coordinate Mg(2+). Residues aspartate 26–lysine 29, asparagine 51–histidine 54, threonine 142, arginine 156, asparagine 233, threonine 248, and arginine 312 contribute to the IMP site. Histidine 54 functions as the Proton donor in the catalytic mechanism. Valine 308–arginine 314 provides a ligand contact to substrate. Residues arginine 314, lysine 340–aspartate 342, and glycine 422–glycine 424 each bind GTP.

The protein belongs to the adenylosuccinate synthetase family. As to quaternary structure, homodimer. The cofactor is Mg(2+).

The protein resides in the cytoplasm. It catalyses the reaction IMP + L-aspartate + GTP = N(6)-(1,2-dicarboxyethyl)-AMP + GDP + phosphate + 2 H(+). Its pathway is purine metabolism; AMP biosynthesis via de novo pathway; AMP from IMP: step 1/2. Plays an important role in the de novo pathway and in the salvage pathway of purine nucleotide biosynthesis. Catalyzes the first committed step in the biosynthesis of AMP from IMP. This chain is Adenylosuccinate synthetase, found in Schizosaccharomyces japonicus (strain yFS275 / FY16936) (Fission yeast).